A 188-amino-acid polypeptide reads, in one-letter code: M-phase phosphoprotein 6 homolog (188 aa).

The segment at 93 to 188 (EENVDEKDVS…NKNKKKKKRN (96 aa)) is disordered. A compositionally biased stretch (basic and acidic residues) spans 120–149 (LTERERRKQELVSKKAEASRKMEVKAPAKE). Ser167 carries the phosphoserine modification. Positions 174-188 (RKTKKNKNKKKKKRN) are enriched in basic residues.

It belongs to the MPP6 family. As to quaternary structure, associates with the RNA exosome complex.

It is found in the nucleus. In terms of biological role, RNA-binding protein that associates with the RNA exosome complex. This chain is M-phase phosphoprotein 6 homolog, found in Schizosaccharomyces pombe (strain 972 / ATCC 24843) (Fission yeast).